Reading from the N-terminus, the 555-residue chain is Probable ferredoxin/ferredoxin--NADP reductase (555 aa).

4Fe-4S ferredoxin-type domains are found at residues proline 2 to aspartate 29 and glutamate 37 to arginine 66. Positions 9, 15, 19, 46, 49, 52, and 56 each coordinate [4Fe-4S] cluster. The segment at valine 115–serine 555 is ferredoxin--NADP reductase. 4 residues coordinate FAD: alanine 123, glutamate 143, leucine 151, and isoleucine 187. NADP(+) is bound by residues arginine 213, asparagine 258–valine 261, arginine 302–arginine 303, and glutamate 314. Residues tryptophan 453 and glycine 460–isoleucine 462 contribute to the FAD site. Residue glycine 460 coordinates NADP(+).

The protein in the C-terminal section; belongs to the ferredoxin--NADP reductase family. [4Fe-4S] cluster serves as cofactor. The cofactor is FAD.

It carries out the reaction 2 reduced [2Fe-2S]-[ferredoxin] + NADP(+) + H(+) = 2 oxidized [2Fe-2S]-[ferredoxin] + NADPH. The chain is Probable ferredoxin/ferredoxin--NADP reductase (fprB) from Mycobacterium leprae (strain TN).